The sequence spans 250 residues: MMDLNADLGEGFGNWTLTDDDALLACVTSANVACGFHAGDASVMRRVCDAAAAGGVRIGAQVSYRDLAGFGRRSMDVPPAELTAEIAYQIGALRVFAEAAGATVSYVKPHGALYNRVVWDDDQAAAVVAGVRLAGGAPAVLGLPGSRLLAHAAEAGLPAVQEAFADRAYTPQGTLVPRGEPGAVVHDPDDVVRRSVGMAVERAVTGADGSRIPVAARSLCVHGDTPGAAALARRVRAALEEAGVEVRAFA.

This sequence belongs to the LamB/PxpA family. In terms of assembly, forms a complex composed of PxpA, PxpB and PxpC.

The catalysed reaction is 5-oxo-L-proline + ATP + 2 H2O = L-glutamate + ADP + phosphate + H(+). Functionally, catalyzes the cleavage of 5-oxoproline to form L-glutamate coupled to the hydrolysis of ATP to ADP and inorganic phosphate. The chain is 5-oxoprolinase subunit A from Streptomyces griseus subsp. griseus (strain JCM 4626 / CBS 651.72 / NBRC 13350 / KCC S-0626 / ISP 5235).